The sequence spans 216 residues: Ribosomal RNA small subunit methyltransferase G (216 aa).

Residues Gly-83, Met-88, 134–135, and Arg-149 each bind S-adenosyl-L-methionine; that span reads VE.

It belongs to the methyltransferase superfamily. RNA methyltransferase RsmG family.

Its subcellular location is the cytoplasm. It catalyses the reaction guanosine(527) in 16S rRNA + S-adenosyl-L-methionine = N(7)-methylguanosine(527) in 16S rRNA + S-adenosyl-L-homocysteine. Its function is as follows. Specifically methylates the N7 position of guanine in position 527 of 16S rRNA. The chain is Ribosomal RNA small subunit methyltransferase G from Pseudomonas putida (strain ATCC 700007 / DSM 6899 / JCM 31910 / BCRC 17059 / LMG 24140 / F1).